We begin with the raw amino-acid sequence, 762 residues long: Probable inorganic carbon transporter subunit DabA (762 aa).

Residues Cys279, Asp281, His461, and Cys476 each coordinate Zn(2+).

Belongs to the inorganic carbon transporter (TC 9.A.2) DabA family. As to quaternary structure, forms a complex with DabB. Requires Zn(2+) as cofactor.

It is found in the cell inner membrane. In terms of biological role, part of an energy-coupled inorganic carbon pump. In Legionella pneumophila subsp. pneumophila (strain Philadelphia 1 / ATCC 33152 / DSM 7513), this protein is Probable inorganic carbon transporter subunit DabA.